A 228-amino-acid chain; its full sequence is Phosphoribosylformylglycinamidine synthase subunit PurQ (228 aa).

In terms of domain architecture, Glutamine amidotransferase type-1 spans 3 to 226 (FAVVVFPGSN…VTYWRDAHVV (224 aa)). The active-site Nucleophile is Cys86. Residues His195 and Glu197 contribute to the active site.

As to quaternary structure, part of the FGAM synthase complex composed of 1 PurL, 1 PurQ and 2 PurS subunits.

It localises to the cytoplasm. The catalysed reaction is N(2)-formyl-N(1)-(5-phospho-beta-D-ribosyl)glycinamide + L-glutamine + ATP + H2O = 2-formamido-N(1)-(5-O-phospho-beta-D-ribosyl)acetamidine + L-glutamate + ADP + phosphate + H(+). The enzyme catalyses L-glutamine + H2O = L-glutamate + NH4(+). The protein operates within purine metabolism; IMP biosynthesis via de novo pathway; 5-amino-1-(5-phospho-D-ribosyl)imidazole from N(2)-formyl-N(1)-(5-phospho-D-ribosyl)glycinamide: step 1/2. Functionally, part of the phosphoribosylformylglycinamidine synthase complex involved in the purines biosynthetic pathway. Catalyzes the ATP-dependent conversion of formylglycinamide ribonucleotide (FGAR) and glutamine to yield formylglycinamidine ribonucleotide (FGAM) and glutamate. The FGAM synthase complex is composed of three subunits. PurQ produces an ammonia molecule by converting glutamine to glutamate. PurL transfers the ammonia molecule to FGAR to form FGAM in an ATP-dependent manner. PurS interacts with PurQ and PurL and is thought to assist in the transfer of the ammonia molecule from PurQ to PurL. In Anoxybacillus flavithermus (strain DSM 21510 / WK1), this protein is Phosphoribosylformylglycinamidine synthase subunit PurQ.